The following is a 471-amino-acid chain: Methionine aminopeptidase 2 (471 aa).

2 disordered regions span residues Val-16–Phe-80 and Cys-92–Arg-139. A compositionally biased stretch (acidic residues) spans Glu-32–Val-47. Positions Lys-52–Gly-65 are enriched in basic residues. The segment covering Ala-119–Arg-139 has biased composition (basic and acidic residues). His-224 provides a ligand contact to substrate. Asp-244, Asp-255, and His-324 together coordinate a divalent metal cation. His-332 serves as a coordination point for substrate. 2 residues coordinate a divalent metal cation: Glu-357 and Glu-452.

The protein belongs to the peptidase M24A family. Methionine aminopeptidase eukaryotic type 2 subfamily. Co(2+) is required as a cofactor. The cofactor is Zn(2+). It depends on Mn(2+) as a cofactor. Requires Fe(2+) as cofactor.

It is found in the cytoplasm. It carries out the reaction Release of N-terminal amino acids, preferentially methionine, from peptides and arylamides.. In terms of biological role, cotranslationally removes the N-terminal methionine from nascent proteins. The N-terminal methionine is often cleaved when the second residue in the primary sequence is small and uncharged (Met-Ala-, Cys, Gly, Pro, Ser, Thr, or Val). The polypeptide is Methionine aminopeptidase 2 (Yarrowia lipolytica (strain CLIB 122 / E 150) (Yeast)).